The following is a 95-amino-acid chain: Aspartyl/glutamyl-tRNA(Asn/Gln) amidotransferase subunit C (95 aa).

Residues 55–67 show a composition bias toward basic and acidic residues; sequence ALERRNVTREDQV. The tract at residues 55 to 83 is disordered; the sequence is ALERRNVTREDQVHNSLTNDKALENAPET.

The protein belongs to the GatC family. Heterotrimer of A, B and C subunits.

It catalyses the reaction L-glutamyl-tRNA(Gln) + L-glutamine + ATP + H2O = L-glutaminyl-tRNA(Gln) + L-glutamate + ADP + phosphate + H(+). The enzyme catalyses L-aspartyl-tRNA(Asn) + L-glutamine + ATP + H2O = L-asparaginyl-tRNA(Asn) + L-glutamate + ADP + phosphate + 2 H(+). Its function is as follows. Allows the formation of correctly charged Asn-tRNA(Asn) or Gln-tRNA(Gln) through the transamidation of misacylated Asp-tRNA(Asn) or Glu-tRNA(Gln) in organisms which lack either or both of asparaginyl-tRNA or glutaminyl-tRNA synthetases. The reaction takes place in the presence of glutamine and ATP through an activated phospho-Asp-tRNA(Asn) or phospho-Glu-tRNA(Gln). The chain is Aspartyl/glutamyl-tRNA(Asn/Gln) amidotransferase subunit C from Natranaerobius thermophilus (strain ATCC BAA-1301 / DSM 18059 / JW/NM-WN-LF).